Consider the following 299-residue polypeptide: MKKVRAAIVGYGNIGRYVLEALQAAPDFEIAGVVRRAGAENKPAELNDYAVVKDIKELQGVDVAILCTPTRSVEKYAKEILAMGINTVDSFDIHTGIVDLRRELGACAKEHGAVSIISAGWDPGSDSIVRTMLEAIAPKGITYTNFGPGMSMGHTVAVKAIDGVKAALSMTIPTGTGIHRRMVYIELKDGYKFEEVAAAIKSDAYFVNDETHVKQVPSVDALLDMGHGVNLTRKGVSGKTQNQLFEFNMRINNPALTAQVLVCVARASMKQQPGCYTMVEVPVIDLLPGDREEWIGHLV.

Residues 11–14 (YGNI), R36, 67–70 (CTPT), 90–92 (SFD), and 119–123 (AGWDP) each bind NADP(+). Substrate contacts are provided by residues D92, D122, F146, 152-153 (MG), T171, R181, H227, and N253.

The protein belongs to the diaminopimelate dehydrogenase family. As to quaternary structure, homodimer.

The enzyme catalyses meso-2,6-diaminopimelate + NADP(+) + H2O = (S)-2-amino-6-oxoheptanedioate + NH4(+) + NADPH + H(+). It functions in the pathway amino-acid biosynthesis; L-lysine biosynthesis via DAP pathway; DL-2,6-diaminopimelate from (S)-tetrahydrodipicolinate: step 1/1. Its function is as follows. Catalyzes the reversible NADPH-dependent reductive amination of L-2-amino-6-oxopimelate, the acyclic form of L-tetrahydrodipicolinate, to generate the meso compound, D,L-2,6-diaminopimelate. Probably plays a role in lysine biosynthesis. Exhibits a high substrate specificity for meso-2,6-diaminopimelate (m-DAP), since the activity with L,L-2,6-diaminopimelate is less than 5% of the activity observed with m-DAP. Can use NAD(+) only very poorly since the activity observed in the presence of NAD(+) is about 14% of that with NADP(+). The protein is Meso-diaminopimelate D-dehydrogenase (ddh) of Bacteroides fragilis (strain ATCC 25285 / DSM 2151 / CCUG 4856 / JCM 11019 / LMG 10263 / NCTC 9343 / Onslow / VPI 2553 / EN-2).